The primary structure comprises 104 residues: L-rhamnose mutarotase (104 aa).

Position 18 (tyrosine 18) interacts with substrate. The active-site Proton donor is histidine 22. Substrate contacts are provided by residues tyrosine 41 and 76 to 77 (WW).

Belongs to the rhamnose mutarotase family. Homodimer.

It localises to the cytoplasm. The catalysed reaction is alpha-L-rhamnose = beta-L-rhamnose. Its pathway is carbohydrate metabolism; L-rhamnose metabolism. Functionally, involved in the anomeric conversion of L-rhamnose. This is L-rhamnose mutarotase from Escherichia coli O17:K52:H18 (strain UMN026 / ExPEC).